The primary structure comprises 431 residues: Enolase (431 aa).

(2R)-2-phosphoglycerate is bound at residue Q166. E208 acts as the Proton donor in catalysis. Mg(2+) is bound by residues D245, E288, and D315. 4 residues coordinate (2R)-2-phosphoglycerate: K340, R369, S370, and K391. The Proton acceptor role is filled by K340.

This sequence belongs to the enolase family. Mg(2+) is required as a cofactor.

The protein localises to the cytoplasm. The protein resides in the secreted. It localises to the cell surface. The enzyme catalyses (2R)-2-phosphoglycerate = phosphoenolpyruvate + H2O. The protein operates within carbohydrate degradation; glycolysis; pyruvate from D-glyceraldehyde 3-phosphate: step 4/5. Its function is as follows. Catalyzes the reversible conversion of 2-phosphoglycerate (2-PG) into phosphoenolpyruvate (PEP). It is essential for the degradation of carbohydrates via glycolysis. The protein is Enolase of Clostridium botulinum (strain Eklund 17B / Type B).